The following is a 516-amino-acid chain: H/ACA ribonucleoprotein complex subunit DKC1 (516 aa).

The segment at 1–24 (MADGDGSSVKKRRKKDKRSLPDED) is disordered. Residue Asp123 is the Nucleophile of the active site. The PUA domain occupies 294–369 (HKRLVMKDSA…VVAKIKRVIM (76 aa)). The interval 422–516 (KKEAAKVPQA…KQKEVEESSE (95 aa)) is disordered. Positions 434-446 (EVERAPKRKRESE) are enriched in basic and acidic residues. The segment covering 453–464 (SPPPSPATPPPE) has biased composition (pro residues). The stretch at 463–516 (PEELSKKEKKKKKKEKKAKEAAESGEEQVEVISESSAKKKKKKKKQKEVEESSE) forms a coiled coil. A compositionally biased stretch (basic residues) spans 469 to 478 (KEKKKKKKEK).

This sequence belongs to the pseudouridine synthase TruB family. Part of the H/ACA small nucleolar ribonucleoprotein (H/ACA snoRNP) complex, which contains NHP2/NOLA2, GAR1/NOLA1, NOP10/NOLA3, and DKC1/NOLA4, which is presumed to be the catalytic subunit. The complex contains a stable core formed by binding of one or two NOP10-DKC1 heterodimers to NHP2; GAR1 subsequently binds to this core via DKC1. The complex binds a box H/ACA small nucleolar RNA (snoRNA), which may target the specific site of modification within the RNA substrate.

It localises to the nucleus. The protein resides in the nucleolus. Its subcellular location is the cajal body. The enzyme catalyses uridine in 5S rRNA = pseudouridine in 5S rRNA. In terms of biological role, catalytic subunit of H/ACA small nucleolar ribonucleoprotein (H/ACA snoRNP) complex, which catalyzes pseudouridylation of rRNA. This involves the isomerization of uridine such that the ribose is subsequently attached to C5, instead of the normal N1. Each rRNA can contain up to 100 pseudouridine ('psi') residues, which may serve to stabilize the conformation of rRNAs. Required for ribosome biogenesis and telomere maintenance. In Gallus gallus (Chicken), this protein is H/ACA ribonucleoprotein complex subunit DKC1 (DKC1).